Reading from the N-terminus, the 520-residue chain is Cilia- and flagella-associated protein 157 (520 aa).

The disordered stretch occupies residues 1–22 (MAPKKSVSKAGKELEVKKKGGK). Residues 10-22 (AGKELEVKKKGGK) show a composition bias toward basic and acidic residues. Coiled-coil stretches lie at residues 33–189 (LAKE…LEKK) and 236–372 (LQMA…QATS). The tract at residues 416-453 (PQKAACPHQESQSHGPPKESRPSIQLPRTGSLLPQLSD) is disordered. Residues 437–453 (PSIQLPRTGSLLPQLSD) show a composition bias toward polar residues.

It belongs to the CFAP157 family. Interacts with TUBB and TUBA4A. Interacts with CEP350.

The protein resides in the cytoplasm. It is found in the cytoskeleton. It localises to the cilium basal body. Functionally, specifically required during spermatogenesis for flagellum morphogenesis and sperm motility. May be required to suppress the formation of supernumerary axonemes and ensure a correct ultrastructure. This Homo sapiens (Human) protein is Cilia- and flagella-associated protein 157.